Reading from the N-terminus, the 219-residue chain is Small ribosomal subunit protein uS3c (219 aa).

The region spanning 39 to 111 (IRKFLMEKIK…NSFFNVKINF (73 aa)) is the KH type-2 domain.

This sequence belongs to the universal ribosomal protein uS3 family. Part of the 30S ribosomal subunit.

The protein localises to the plastid. In Euglena longa (Euglenophycean alga), this protein is Small ribosomal subunit protein uS3c (rps3).